We begin with the raw amino-acid sequence, 449 residues long: Ribulose bisphosphate carboxylase large chain (449 aa).

N6,N6,N6-trimethyllysine is present on lysine 7. Residues asparagine 116 and threonine 166 each coordinate substrate. The active-site Proton acceptor is the lysine 168. Residue lysine 170 coordinates substrate. Residues lysine 194, aspartate 196, and glutamate 197 each contribute to the Mg(2+) site. Lysine 194 is subject to N6-carboxylysine. Catalysis depends on histidine 287, which acts as the Proton acceptor. Substrate contacts are provided by arginine 288, histidine 320, and serine 372.

It belongs to the RuBisCO large chain family. Type I subfamily. In terms of assembly, heterohexadecamer of 8 large chains and 8 small chains; disulfide-linked. The disulfide link is formed within the large subunit homodimers. It depends on Mg(2+) as a cofactor. The disulfide bond which can form in the large chain dimeric partners within the hexadecamer appears to be associated with oxidative stress and protein turnover.

Its subcellular location is the plastid. It is found in the chloroplast. It catalyses the reaction 2 (2R)-3-phosphoglycerate + 2 H(+) = D-ribulose 1,5-bisphosphate + CO2 + H2O. The catalysed reaction is D-ribulose 1,5-bisphosphate + O2 = 2-phosphoglycolate + (2R)-3-phosphoglycerate + 2 H(+). RuBisCO catalyzes two reactions: the carboxylation of D-ribulose 1,5-bisphosphate, the primary event in carbon dioxide fixation, as well as the oxidative fragmentation of the pentose substrate in the photorespiration process. Both reactions occur simultaneously and in competition at the same active site. The polypeptide is Ribulose bisphosphate carboxylase large chain (Aspidistra elatior (Cast-iron plant)).